Consider the following 446-residue polypeptide: Probable D-serine dehydratase (446 aa).

Residue K118 is modified to N6-(pyridoxal phosphate)lysine.

This sequence belongs to the serine/threonine dehydratase family. DsdA subfamily. Pyridoxal 5'-phosphate is required as a cofactor.

It catalyses the reaction D-serine = pyruvate + NH4(+). The polypeptide is Probable D-serine dehydratase (Ectopseudomonas mendocina (strain ymp) (Pseudomonas mendocina)).